A 361-amino-acid chain; its full sequence is MTNIDAPVTVQVAVDPPYPVVIGTGLSDQLDELLANRHRVAILHQPVLTQTAEAIRSHLAGKGVDAHRIEIPDAEAGKDLSVMDFIWEVLGRIGIGRKDALVSFGGGAATDVAGFAAATWLRGVSIVHVPTTLLGMVDAAVGGKTGINTEAGKNLVGAFHQPLAVLADLATLETLPRKEIASGMAEVVKAGFIADPIILDLIEADPQASLDPMGGVLPELIRRAVTVKAGVVSADEKESELREILNYGHTLAHAIERRERYEWRHGAAVSVGLVFAAELARVAGRLDDATAQRHHTILTSLGLPVSYDADALPQLLEYMAGDKKTRAGVLRFVILDGLAKPGRLVGPDPGLLVTAYAGLSA.

NAD(+) is bound by residues 73 to 78 (DAEAGK), 107 to 111 (GAATD), 131 to 132 (TT), Lys-144, Lys-153, and 171 to 174 (TLET). Residues Glu-186, His-249, and His-265 each coordinate Zn(2+).

The protein belongs to the sugar phosphate cyclases superfamily. Dehydroquinate synthase family. NAD(+) serves as cofactor. Co(2+) is required as a cofactor. Requires Zn(2+) as cofactor.

It is found in the cytoplasm. It carries out the reaction 7-phospho-2-dehydro-3-deoxy-D-arabino-heptonate = 3-dehydroquinate + phosphate. It functions in the pathway metabolic intermediate biosynthesis; chorismate biosynthesis; chorismate from D-erythrose 4-phosphate and phosphoenolpyruvate: step 2/7. Its function is as follows. Catalyzes the conversion of 3-deoxy-D-arabino-heptulosonate 7-phosphate (DAHP) to dehydroquinate (DHQ). This chain is 3-dehydroquinate synthase, found in Mycobacterium leprae (strain TN).